Consider the following 119-residue polypeptide: MPPKKDTKASAKQPQKTQKKKEGSGGGKAKKKKWSKGKVRDKLNNQVLFDKPTYEKLYKEVPQYKLITPAVVSERLKVRGSLARRALIELREKGLIKQVVQHHGQVIYTRATKGDDPVA.

The segment at 1–42 (MPPKKDTKASAKQPQKTQKKKEGSGGGKAKKKKWSKGKVRDK) is disordered. The span at 28–37 (KAKKKKWSKG) shows a compositional bias: basic residues.

It belongs to the eukaryotic ribosomal protein eS25 family.

The sequence is that of Small ribosomal subunit protein eS25 (RpS25) from Spodoptera frugiperda (Fall armyworm).